The chain runs to 264 residues: Thiazole synthase (264 aa).

Lys-101 acts as the Schiff-base intermediate with DXP in catalysis. 1-deoxy-D-xylulose 5-phosphate is bound by residues Gly-162, 188 to 189, and 210 to 211; these read AG and NT.

It belongs to the ThiG family. In terms of assembly, homotetramer. Forms heterodimers with either ThiH or ThiS.

The protein resides in the cytoplasm. The enzyme catalyses [ThiS sulfur-carrier protein]-C-terminal-Gly-aminoethanethioate + 2-iminoacetate + 1-deoxy-D-xylulose 5-phosphate = [ThiS sulfur-carrier protein]-C-terminal Gly-Gly + 2-[(2R,5Z)-2-carboxy-4-methylthiazol-5(2H)-ylidene]ethyl phosphate + 2 H2O + H(+). Its pathway is cofactor biosynthesis; thiamine diphosphate biosynthesis. Its function is as follows. Catalyzes the rearrangement of 1-deoxy-D-xylulose 5-phosphate (DXP) to produce the thiazole phosphate moiety of thiamine. Sulfur is provided by the thiocarboxylate moiety of the carrier protein ThiS. In vitro, sulfur can be provided by H(2)S. This Chromobacterium violaceum (strain ATCC 12472 / DSM 30191 / JCM 1249 / CCUG 213 / NBRC 12614 / NCIMB 9131 / NCTC 9757 / MK) protein is Thiazole synthase.